The primary structure comprises 375 residues: MVSVNLPWELVEEILCRVPPQSLVKFRTVCKQWNSLFDDNKFVNDHFVQSQPQLIFRTESKIYSVAVNFKGPRIEVHELPLAIPGLKSEMPIRLHDYVDCDGLLFCTSYFNGVLIWNPWLRQTRFFPSIHRYPVTYDIGYDNKKQYKMLDYYKCEGDSSIKSIIYEIGLYSKKVKDLESDSTWSIFQSNSVSLNGTLYWAGVDVNNGIFIRSFSFSTEKPRTFCSLPFMYDDDNVLALAVFRKDRLSLLNLCNKTSEIKIWLTKNNINDREVGLEEDVVWINLMTVLIPNFPKFSFYWYNRPDLTYFLDNDDAKRLVICCYDETDQAYIYIVKGDMFKKIKIDQYEVLSDYSRPHFHTYIPSLVRPSRVKEDNKN.

The region spanning 1–46 is the F-box domain; sequence MVSVNLPWELVEEILCRVPPQSLVKFRTVCKQWNSLFDDNKFVNDH.

The chain is Putative F-box only protein 11 (FBX11) from Arabidopsis thaliana (Mouse-ear cress).